The primary structure comprises 430 residues: Gustatory receptor-like 43a (430 aa).

Topologically, residues 1–31 (MSTGSHSPEAMWSATNFRRHQRKPNQVLHRW) are cytoplasmic. The chain crosses the membrane as a helical span at residues 32–52 (FFKGSAWIIYAIACGLHFFKL). At 53 to 79 (HYNERTNQVEESQYHRIWSKIVVVLKV) the chain is on the extracellular side. The chain crosses the membrane as a helical span at residues 80–100 (ILLASPYLQYFVLGLGIYIHI). Topologically, residues 101–110 (TLVQDSKAQN) are cytoplasmic. The chain crosses the membrane as a helical span at residues 111–131 (FLMSLIVLGIVIGVLRRLLIF). The Extracellular portion of the chain corresponds to 132–168 (LHLKRDRRFLKHTVNEILHITSALEQKFGMEYKCDST). A helical membrane pass occupies residues 169-189 (LLVVYLAKLWILTVMLDSLWY). Residues 190–277 (KPYFLSSIFL…RDNVSWLSTS (88 aa)) are Cytoplasmic-facing. A helical membrane pass occupies residues 278–298 (VYLMIFTCIFNAELLIECSLF). Residues 299 to 306 (AGDELENK) are Extracellular-facing. A helical membrane pass occupies residues 307–327 (IYIITDGCLGPVCVPILYVLI). Topologically, residues 328–396 (LGMCTDRFRD…IILDITCDRE (69 aa)) are cytoplasmic. A helical transmembrane segment spans residues 397-417 (FVMDYIVTVILTALSLVQYTI). The Extracellular segment spans residues 418 to 430 (STGGNISECVTHK). N-linked (GlcNAc...) asparagine glycosylation is present at Asn422.

It is found in the cell membrane. This chain is Gustatory receptor-like 43a, found in Drosophila melanogaster (Fruit fly).